The chain runs to 485 residues: GTPase Der (485 aa).

EngA-type G domains lie at 3-167 (PTIA…PEPE) and 176-349 (PVFA…NAAM). GTP contacts are provided by residues 9–16 (GRPNVGKS), 56–60 (DTGGF), 119–122 (NKGE), 182–189 (GRPNVGKS), 229–233 (DTAGV), and 294–297 (NKWD). In terms of domain architecture, KH-like spans 350-434 (IKMPTPKITR…PLRIQYNVSE (85 aa)). The disordered stretch occupies residues 435–485 (NPYENAEDKPKKKPLRRVSLSNRIEKREGRKEEKNRFKKKTKVSVKKQFSK). The segment covering 457–469 (RIEKREGRKEEKN) has biased composition (basic and acidic residues). Over residues 470–485 (RFKKKTKVSVKKQFSK) the composition is skewed to basic residues.

Belongs to the TRAFAC class TrmE-Era-EngA-EngB-Septin-like GTPase superfamily. EngA (Der) GTPase family. In terms of assembly, associates with the 50S ribosomal subunit.

Its function is as follows. GTPase that plays an essential role in the late steps of ribosome biogenesis. The protein is GTPase Der of Neisseria meningitidis serogroup B (strain ATCC BAA-335 / MC58).